The primary structure comprises 496 residues: Glutamate--tRNA ligase (496 aa).

The 'HIGH' region signature appears at 12–22; that stretch reads PSPTGTPHVGL. Positions 256–260 match the 'KMSKS' region motif; that stretch reads KLSKR. Lys259 contacts ATP.

This sequence belongs to the class-I aminoacyl-tRNA synthetase family. Glutamate--tRNA ligase type 1 subfamily. In terms of assembly, monomer.

Its subcellular location is the cytoplasm. The catalysed reaction is tRNA(Glu) + L-glutamate + ATP = L-glutamyl-tRNA(Glu) + AMP + diphosphate. Its function is as follows. Catalyzes the attachment of glutamate to tRNA(Glu) in a two-step reaction: glutamate is first activated by ATP to form Glu-AMP and then transferred to the acceptor end of tRNA(Glu). This Mycobacteroides abscessus (strain ATCC 19977 / DSM 44196 / CCUG 20993 / CIP 104536 / JCM 13569 / NCTC 13031 / TMC 1543 / L948) (Mycobacterium abscessus) protein is Glutamate--tRNA ligase.